The sequence spans 636 residues: Topoisomerase I damage affected protein 7 (636 aa).

Residues 1 to 18 (MNSNSTIGRTTLGESDTI) show a composition bias toward polar residues. Disordered stretches follow at residues 1–33 (MNSNSTIGRTTLGESDTISLSFSEPSSSLNSRS), 87–109 (TLVSSTDSSSSSEQDTYSSQYDP), 238–271 (ISSPSTTSNKDTTFPSSSRNTSTSFYSSSLSSTN), 299–326 (PTSSSVSSSSSKVPSNRPSSSSSSDDTT), and 339–362 (QSTTSSSIPPTTQTPSTSTISTSP). A glycan (N-linked (GlcNAc...) asparagine) is linked at Asn-4. Low complexity-rich tracts occupy residues 19–33 (SLSFSEPSSSLNSRS) and 87–108 (TLVSSTDSSSSSEQDTYSSQYD). Asn-257 carries an N-linked (GlcNAc...) asparagine glycan. Residues 457-477 (IVGSVVGSVGGILICVLVVWF) traverse the membrane as a helical segment. A glycan (N-linked (GlcNAc...) asparagine) is linked at Asn-492. The span at 510-541 (QAKEASLQAQDSGSQQRNTETASANNPFSNEF) shows a compositional bias: polar residues. Residues 510–551 (QAKEASLQAQDSGSQQRNTETASANNPFSNEFNFKARGNPPP) form a disordered region. Lys-512 participates in a covalent cross-link: Glycyl lysine isopeptide (Lys-Gly) (interchain with G-Cter in ubiquitin). Residues Asn-557, Asn-562, and Asn-626 are each glycosylated (N-linked (GlcNAc...) asparagine). At Ser-628 the chain carries Phosphoserine.

Belongs to the TDA7 family.

The protein localises to the vacuole membrane. The polypeptide is Topoisomerase I damage affected protein 7 (TDA7) (Saccharomyces cerevisiae (strain YJM789) (Baker's yeast)).